Consider the following 917-residue polypeptide: Major intrinsically disordered Notch2-binding receptor 1 (917 aa).

At 1-892 (MEANQEASLF…AEFRRAKVCK (892 aa)) the chain is on the cytoplasmic side. Disordered stretches follow at residues 337 to 367 (STYF…WPAK), 389 to 410 (SEEK…GPDR), 457 to 476 (DKSI…SVGT), 568 to 588 (ITNG…NVHH), 652 to 679 (SEAP…LENS), 706 to 727 (TRPS…IASI), and 746 to 783 (NEEE…LPKQ). The segment covering 460 to 476 (ISCTSGQHSSDTSSVGT) has biased composition (polar residues). The span at 576 to 588 (KGDKCNRPENVHH) shows a compositional bias: basic and acidic residues. Ser712 is modified (phosphoserine). Residues 893 to 913 (IAALITAAACTVILVIVVPIC) form a helical membrane-spanning segment. Topologically, residues 914–917 (TMKS) are extracellular.

The protein belongs to the MINAR family. In terms of assembly, interacts with NOTCH2; this interaction increases MINAR1 stability. Interacts (via N-terminus) with DEPTOR (via PDZ domain); this interaction may stabilize DEPTOR protein by impairing its ubiquitination.

The protein localises to the cell membrane. Intrinsically disordered protein which may negatively regulate mTOR signaling pathway by stabilizing the mTOR complex component DEPTOR. Negatively regulates angiogenesis. Negatively regulates cell growth. Negatively regulates neurite outgrowth in hippocampal neurons. The polypeptide is Major intrinsically disordered Notch2-binding receptor 1 (Minar1) (Rattus norvegicus (Rat)).